We begin with the raw amino-acid sequence, 481 residues long: MHITKPHAAMFSSPGMGHVLPVIELAKRLSANHGFHVTVFVLETDAASVQSKLLNSTGVDIVNLPSPDISGLVDPNAHVVTKIGVIMREAVPTLRSKIVAMHQNPTALIIDLFGTDALCLAAELNMLTYVFIASNARYLGVSIYYPTLDEVIKEEHTVQRKPLTIPGCEPVRFEDIMDAYLVPDEPVYHDLVRHCLAYPKADGILVNTWEEMEPKSLKSLQDPKLLGRVARVPVYPVGPLCRPIQSSTTDHPVFDWLNKQPNESVLYISFGSGGSLTAQQLTELAWGLEESQQRFIWVVRPPVDGSSCSDYFSAKGGVTKDNTPEYLPEGFVTRTCDRGFMIPSWAPQAEILAHQAVGGFLTHCGWSSTLESVLCGVPMIAWPLFAEQNMNAALLSDELGISVRVDDPKEAISRSKIEAMVRKVMAEDEGEEMRRKVKKLRDTAEMSLSIHGGGSAHESLCRVTKECQRFLECVGDLGRGA.

His18 serves as the catalytic Proton acceptor. His18 is a binding site for an anthocyanidin. Asp111 (charge relay) is an active-site residue. UDP-alpha-D-glucose is bound by residues Ala346, Gln348, His363, Trp366, Ser368, and Glu371. Ala386 lines the an anthocyanidin pocket. The UDP-alpha-D-glucose site is built by Glu387 and Gln388.

The protein belongs to the UDP-glycosyltransferase family. In terms of tissue distribution, expressed in seedlings and roots, and at lower levels in flowers and siliques.

The catalysed reaction is (E)-4-coumarate + UDP-alpha-D-glucose = 4-O-(beta-D-glucosyl)-trans-4-coumarate + UDP + H(+). The enzyme catalyses (E)-sinapyl alcohol + UDP-alpha-D-glucose = 4-O-(beta-D-glucosyl)-trans-4-sinapoyl alcohol + UDP + H(+). It carries out the reaction (E)-coniferol + UDP-alpha-D-glucose = 4-O-(beta-D-glucosyl)-(E)-coniferol + UDP + H(+). It catalyses the reaction (E)-sinapate + UDP-alpha-D-glucose = 4-O-(beta-D-glucosyl)-trans-sinapate + UDP + H(+). The catalysed reaction is (E)-coniferaldehyde + UDP-alpha-D-glucose = 4-O-(beta-D-glucosyl)-4-(E)-coniferyl aldehyde + UDP + H(+). The enzyme catalyses (E)-sinapaldehyde + UDP-alpha-D-glucose = 4-O-(beta-D-glucosyl)-4-trans-sinapoyl aldehyde + UDP + H(+). Functionally, involved in the O-glucosylation of monolignols (alcohol monomers of lignin). Glucosylates coniferyl alcohol to form coniferyl alcohol 4-O-glucoside. Glucosylates sinapyl alcohol to form sinapyl alcohol 4-O-glucoside. Possesses low activity with sinapate as substrate. The sequence is that of UDP-glycosyltransferase 72E3 from Arabidopsis thaliana (Mouse-ear cress).